We begin with the raw amino-acid sequence, 325 residues long: Thiamine-monophosphate kinase (325 aa).

Residues Asp30, Ser45, Thr46, and Asp47 each coordinate Mg(2+). Residue His54 coordinates substrate. Mg(2+) is bound by residues Asp75 and Asp122. Residues 121-122 (GD) and Arg146 contribute to the ATP site. Residue Asp212 participates in Mg(2+) binding. Ser214 serves as a coordination point for ATP. Asp215 contacts Mg(2+). Substrate is bound by residues Glu263 and Tyr319.

This sequence belongs to the thiamine-monophosphate kinase family.

It carries out the reaction thiamine phosphate + ATP = thiamine diphosphate + ADP. Its pathway is cofactor biosynthesis; thiamine diphosphate biosynthesis; thiamine diphosphate from thiamine phosphate: step 1/1. Its function is as follows. Catalyzes the ATP-dependent phosphorylation of thiamine-monophosphate (TMP) to form thiamine-pyrophosphate (TPP), the active form of vitamin B1. The protein is Thiamine-monophosphate kinase (thiL) of Salmonella typhimurium (strain LT2 / SGSC1412 / ATCC 700720).